Reading from the N-terminus, the 165-residue chain is UPF0669 protein v1g209471 (165 aa).

A signal peptide spans 1–23 (MQGRYSAPLFLLLWLFFLHGTLC). Asn38 carries an N-linked (GlcNAc...) asparagine glycan.

This sequence belongs to the UPF0669 family.

It is found in the secreted. The sequence is that of UPF0669 protein v1g209471 from Nematostella vectensis (Starlet sea anemone).